Consider the following 245-residue polypeptide: Anti-Pycsar protein Apyc1 (245 aa).

The interval 19 to 219 (FNNNALLYAG…EIQSQILLKH (201 aa)) is beta-lactamase-like. The Zn(2+) site is built by histidine 61, histidine 63, aspartate 65, histidine 66, histidine 145, aspartate 165, and histidine 219.

This sequence belongs to the anti-Pycsar protein Apyc1 family. Homodimer. Requires Zn(2+) as cofactor.

The catalysed reaction is 3',5'-cyclic CMP + H2O = CMP + H(+). The enzyme catalyses 3',5'-cyclic UMP + H2O = UMP + H(+). Functionally, counteracts the endogenous Pycsar antiviral defense system. Phosphodiesterase that enables metal-dependent hydrolysis of host cyclic nucleotide Pycsar defense signals such as cCMP and cUMP. The chain is Anti-Pycsar protein Apyc1 from Paenibacillus sp. (strain J14).